A 352-amino-acid chain; its full sequence is Protein YpbB (352 aa).

Interacts with RecS and SSB (ssbA); the 6 C-terminal residues of SSB are required for interaction with YpbB.

Its subcellular location is the cytoplasm. It localises to the nucleoid. In Bacillus subtilis (strain 168), this protein is Protein YpbB (ypbB).